Consider the following 591-residue polypeptide: MFVLPPPPPRYTVPVAYAAGASNGMAVPVVETNNIISHPEGGCSLQAGEGTYLLRDDLHLATPPPHPSEAPVMNPNPLATVPAPPTSGVKLSLVSIGSRIKTPTPSVDGVGAASLFGDGNPALAAPPVKEGLKRRKPKNNIIKSSSSFVSRVITHETATKRLNDRNPDGLFAFANINRAFQWLDLSAKQKEEPVTKILFTKAHMISHDINELTKSTSHIDVVMGSSAGDIIWYEPMSQKYARINKNGVVNNSPVTHIKWIPGSENLFMAAHANGQLVVYDKEKEDALFAPELGSPSAETMKSSSGRSPLQILKSVNSRNQKTNPVALWKLANQKITQFAFSPDRRHLAVVLEDGSLRVMDYLKEEVLDIFRSYYGGLICVCWSPDGKYIVTGGQDDLVTIWSLPERKIVARCQGHNSWVSAVAFDPWRCDDRTYRFGSVGDDCRLLLWDFSVGMLHRPRVHQANARQRTSMIVSNTQHLNRHRADSGGNRTRSDSQETADTYNSYDPTVRHPVEPRARTALLPPIMSKIVGEDPICWLGFQEDSIMTSSLEGHIRTWDRPREGINDNYSYSPAISASATGSGRADSMMGSL.

WD repeat units follow at residues 249–289 (VNNS…ALFA), 330–371 (LANQ…DIFR), 372–411 (SYYG…IVAR), and 414–458 (GHNS…LHRP). The tract at residues 477-510 (QHLNRHRADSGGNRTRSDSQETADTYNSYDPTVR) is disordered. Positions 496–506 (QETADTYNSYD) are enriched in polar residues. One copy of the WD 5 repeat lies at 530 to 567 (VGEDPICWLGFQEDSIMTSSLEGHIRTWDRPREGINDN).

This sequence belongs to the WD repeat creC family. In terms of assembly, interacts with creB.

Its function is as follows. Component of the regulatory network controlling carbon source utilization through ubiquitination and deubiquitination involving creA, creB, creC, creD and acrB. Required to prevent the proteolysis of the CreB deubiquitinating enzyme in the absence of carbon catabolite repression. CreB deubiquitinating enzyme stabilized in a complex with the CreC leads to the expression of genes such as those in the proline and quinate pathways. This is Probable catabolite repression protein creC (creC) from Aspergillus niger (strain ATCC MYA-4892 / CBS 513.88 / FGSC A1513).